Here is a 263-residue protein sequence, read N- to C-terminus: Polyglutamine-binding protein 1 (263 aa).

Residues 46 to 80 (EGLPPSWYKVFDPSCGLPYYWNVETDLVSWLSPHD) form the WW domain. A disordered region spans residues 94 to 263 (NSNADAEDKS…AEASRSKQQD (170 aa)). A compositionally biased stretch (basic and acidic residues) spans 99–173 (AEDKSERNLE…DKADREDGKD (75 aa)). One copy of the 1-1; approximate repeat lies at 104–110 (ERNLEKV). The segment at 104–138 (ERNLEKVDRNHEKSDRSHEKPDRSHEKADRNHEKS) is 5 X 7 AA approximate tandem repeats of D-R-[NS]-H-E-K-S. The stretch at 111 to 117 (DRNHEKS) is one 1-2 repeat. Residues 118–124 (DRSHEKP) form a 1-3; approximate repeat. The 1-4; approximate repeat unit spans residues 125–131 (DRSHEKA). 10 tandem repeats follow at residues 132–138 (DRNHEKS), 139–140 (DR), 141–142 (ER), 143–144 (ER), 150–151 (DR), 152–153 (ER), 154–155 (DR), 156–157 (DR), 158–159 (ER), and 160–161 (ER). Residues 139-144 (DRERER) form a 3 X 2 AA tandem repeats of [DE]-R region. Residues 150-161 (DRERDRDRERER) are 6 X 2 AA tandem repeats of [DE]-R. The interval 243 to 253 (YPSPGAVLRAN) is important for interaction with TXNL4A. Ser245 is modified (phosphoserine).

Interacts with POU3F2/Brn-2, ATXN1, TXNL4A, HTT and AR. Interaction with ATXN1 correlates positively with the length of the polyglutamine tract. Interacts with RNA polymerase II large subunit in a phosphorylation-dependent manner. Forms a ternary complex with ATXN1 mutant and phosphorylated RNA polymerase II. Interacts (via C-terminus) with TXNL4A and CD2BP2. Interacts (via WW domain) with ATN1 and SF3B1, and may interact with additional splice factors. Interacts (via WW domain) with WBP11; Leading to reduce interaction between PQBP1 and TXNL4A. Interacts with CAPRIN1. Interacts with DDX1. Interacts with SFPQ. Interacts with KHSRP.

It localises to the nucleus. It is found in the nucleus speckle. The protein resides in the cytoplasmic granule. In terms of biological role, intrinsically disordered protein that acts as a scaffold, and which is involved in different processes, such as pre-mRNA splicing, transcription regulation, innate immunity and neuron development. Interacts with splicing-related factors via the intrinsically disordered region and regulates alternative splicing of target pre-mRNA species. May suppress the ability of POU3F2 to transactivate the DRD1 gene in a POU3F2 dependent manner. Can activate transcription directly or via association with the transcription machinery. May be involved in ATXN1 mutant-induced cell death. The interaction with ATXN1 mutant reduces levels of phosphorylated RNA polymerase II large subunit. Involved in the assembly of cytoplasmic stress granule, possibly by participating in the transport of neuronal RNA granules. Also acts as an innate immune sensor of infection by retroviruses, by detecting the presence of reverse-transcribed DNA in the cytosol. Directly binds retroviral reverse-transcribed DNA in the cytosol and interacts with CGAS, leading to activate the cGAS-STING signaling pathway, triggering type-I interferon production. This chain is Polyglutamine-binding protein 1 (Pqbp1), found in Rattus norvegicus (Rat).